The sequence spans 368 residues: Transcription factor TGA7 (368 aa).

Polar residues predominate over residues 70 to 82 (HNQIEAEQPSSND). Residues 70-89 (HNQIEAEQPSSNDNQDDDGR) form a disordered region. The bZIP domain maps to 91 to 151 (HDKMKRRLAQ…LGPSGSINTG (61 aa)). 2 coiled-coil regions span residues 92-142 (DKMK…QGHL) and 252-285 (DQQI…SLAE). Residues 93–113 (KMKRRLAQNREAARKSRLRKK) are basic motif. The segment at 119 to 133 (LEESRLKLSQLEQEL) is leucine-zipper. Positions 152–363 (IASFEMEYSH…RALSSLWAAR (212 aa)) constitute a DOG1 domain.

The protein belongs to the bZIP family. Binds DNA as a dimer. Interacts with NPR1 and NPR4. Interacts with GRXC7/ROXY1.

It localises to the nucleus. In terms of biological role, transcriptional activator that binds specifically to the DNA sequence 5'-TGACG-3'. Recognizes ocs elements like the as-1 motif of the cauliflower mosaic virus 35S promoter. Binding to the as-1-like cis elements mediate auxin- and salicylic acid-inducible transcription. May be involved in the induction of the systemic acquired resistance (SAR) via its interaction with NPR1. The chain is Transcription factor TGA7 (TGA7) from Arabidopsis thaliana (Mouse-ear cress).